Reading from the N-terminus, the 142-residue chain is Small ribosomal subunit protein uS9 (142 aa).

It belongs to the universal ribosomal protein uS9 family. As to quaternary structure, component of the small ribosomal subunit (SSU). Mature N.crassa ribosomes consist of a small (40S) and a large (60S) subunit. The 40S small subunit contains 1 molecule of ribosomal RNA (18S rRNA) and at least 32 different proteins. The large 60S subunit contains 3 rRNA molecules (26S, 5.8S and 5S rRNA) and at least 42 different proteins.

It is found in the cytoplasm. Component of the ribosome, a large ribonucleoprotein complex responsible for the synthesis of proteins in the cell. The small ribosomal subunit (SSU) binds messenger RNAs (mRNAs) and translates the encoded message by selecting cognate aminoacyl-transfer RNA (tRNA) molecules. The large subunit (LSU) contains the ribosomal catalytic site termed the peptidyl transferase center (PTC), which catalyzes the formation of peptide bonds, thereby polymerizing the amino acids delivered by tRNAs into a polypeptide chain. The nascent polypeptides leave the ribosome through a tunnel in the LSU and interact with protein factors that function in enzymatic processing, targeting, and the membrane insertion of nascent chains at the exit of the ribosomal tunnel. This chain is Small ribosomal subunit protein uS9 (rps-16), found in Neurospora crassa (strain ATCC 24698 / 74-OR23-1A / CBS 708.71 / DSM 1257 / FGSC 987).